The following is a 227-amino-acid chain: 2,3-bisphosphoglycerate-dependent phosphoglycerate mutase (227 aa).

Substrate contacts are provided by residues 7–14 (RHGQSEWN), 20–21 (TG), arginine 59, 86–89 (ERHY), lysine 97, 113–114 (RR), and 182–183 (GN). The active-site Tele-phosphohistidine intermediate is the histidine 8. Glutamate 86 serves as the catalytic Proton donor/acceptor.

It belongs to the phosphoglycerate mutase family. BPG-dependent PGAM subfamily. As to quaternary structure, homodimer.

The catalysed reaction is (2R)-2-phosphoglycerate = (2R)-3-phosphoglycerate. Its pathway is carbohydrate degradation; glycolysis; pyruvate from D-glyceraldehyde 3-phosphate: step 3/5. In terms of biological role, catalyzes the interconversion of 2-phosphoglycerate and 3-phosphoglycerate. In Neisseria gonorrhoeae (strain ATCC 700825 / FA 1090), this protein is 2,3-bisphosphoglycerate-dependent phosphoglycerate mutase.